We begin with the raw amino-acid sequence, 135 residues long: Fatty acid-binding protein 5 (135 aa).

N-acetylalanine is present on Ala2. Ser3 is modified (phosphoserine). The Nuclear localization signal signature appears at 24–34; it reads KELGVGLALRK. 1-eicosanoylglycerol is bound by residues Cys43, Thr56, and Arg109. Cys120 and Cys127 are disulfide-bonded. Residue 129–131 coordinates 1-eicosanoylglycerol; the sequence is RVY. A (9Z,12Z)-octadecadienoate-binding site is contributed by 129-131; the sequence is RVY. Tyr131 provides a ligand contact to hexadecanoate. Residue Tyr131 coordinates N-eicosanoyl ethanolamine. Tyr131 is modified (phosphotyrosine).

It belongs to the calycin superfamily. Fatty-acid binding protein (FABP) family. As to quaternary structure, monomer. Widely expressed.

Its subcellular location is the cytoplasm. It localises to the nucleus. The protein localises to the synapse. The protein resides in the postsynaptic density. It is found in the secreted. It catalyses the reaction hexadecanoate(out) = hexadecanoate(in). The enzyme catalyses (9Z,12Z)-octadecadienoate(out) = (9Z,12Z)-octadecadienoate(in). It carries out the reaction (9Z)-octadecenoate(out) = (9Z)-octadecenoate(in). Its function is as follows. Intracellular carrier for long-chain fatty acids and related active lipids, such as endocannabinoids, that regulate the metabolism and actions of the ligands they bind. In addition to the cytosolic transport, selectively delivers specific fatty acids from the cytosol to the nucleus, wherein they activate nuclear receptors. Delivers retinoic acid to the nuclear receptor peroxisome proliferator-activated receptor delta; which promotes proliferation and survival. May also serve as a synaptic carrier of endocannabinoid at central synapses and thus controls retrograde endocannabinoid signaling. Modulates inflammation by regulating PTGES induction via NF-kappa-B activation, and prostaglandin E2 (PGE2) biosynthesis during inflammation. May be involved in keratinocyte differentiation. This Mus musculus (Mouse) protein is Fatty acid-binding protein 5.